The chain runs to 786 residues: Progesterone receptor (786 aa).

Residues 1–10 (MTEVKSKETR) are compositionally biased toward basic and acidic residues. Disordered stretches follow at residues 1–95 (MTEV…SKDC), 110–212 (AAPW…ASPA), and 252–279 (SAFG…DGKE). The segment at 1 to 420 (MTEVKSKETR…YSFESLPQKI (420 aa)) is modulating, Pro-Rich. Residue lysine 7 forms a Glycyl lysine isopeptide (Lys-Gly) (interchain with G-Cter in SUMO) linkage. The span at 48–79 (DEEEEEEENEEEEEEEEPQQREEEEEEEEEDR) shows a compositional bias: acidic residues. A compositionally biased stretch (pro residues) spans 143 to 154 (APGPSQPRPGAP). Positions 186–197 (AEERGFPERDAG) are enriched in basic and acidic residues. Residues 203 to 212 (LAPAAAASPA) show a composition bias toward low complexity. Serine 210 and serine 259 each carry phosphoserine. A Glycyl lysine isopeptide (Lys-Gly) (interchain with G-Cter in SUMO); alternate cross-link involves residue lysine 294. Residue lysine 294 forms a Glycyl lysine isopeptide (Lys-Gly) (interchain with G-Cter in ubiquitin); alternate linkage. Lysine 385 is covalently cross-linked (Glycyl lysine isopeptide (Lys-Gly) (interchain with G-Cter in SUMO)). NR C4-type zinc fingers lie at residues 421 to 441 (CLIC…CGSC) and 457 to 481 (CAGR…LRKC). A DNA-binding region (nuclear receptor) is located at residues 421 to 486 (CLICGDEASG…RLRKCCQAGM (66 aa)). Phosphoserine is present on serine 529. One can recognise an NR LBD domain in the interval 532–766 (QEIPFVPPMI…EFPEMMSEVI (235 aa)).

Belongs to the nuclear hormone receptor family. NR3 subfamily. Phosphorylation of Ser-529 is sharply increased upon progesterone treatment, whereas phosphorylation of Ser-210 and Ser-259 is modestly induced by progesterone. In terms of processing, ubiquitinated. Ubiquitination is increased by progesterone and represses sumoylation at the same site. Post-translationally, sumoylation is hormone-dependent and represses transcriptional activity. Sumoylation on all three sites is enhanced by PIAS3. Desumoylated by SENP1. Sumoylation on Lys-385, the main site of sumoylation, is repressed by ubiquitination on the same site. In terms of tissue distribution, oviduct and bursa of Fabricius.

The protein localises to the nucleus. The protein resides in the cytoplasm. Functionally, the steroid hormones and their receptors are involved in the regulation of eukaryotic gene expression and affect cellular proliferation and differentiation in target tissues. This is Progesterone receptor (PGR) from Gallus gallus (Chicken).